Reading from the N-terminus, the 618-residue chain is UvrABC system protein C (618 aa).

Positions 20–98 (TAPGVYRMYA…IKSLSPRYNV (79 aa)) constitute a GIY-YIG domain. Positions 207–242 (DQLGEEIMQSMQQASEALEFERAARLRDLLSSLRSM) constitute a UVR domain.

This sequence belongs to the UvrC family. As to quaternary structure, interacts with UvrB in an incision complex.

The protein localises to the cytoplasm. Functionally, the UvrABC repair system catalyzes the recognition and processing of DNA lesions. UvrC both incises the 5' and 3' sides of the lesion. The N-terminal half is responsible for the 3' incision and the C-terminal half is responsible for the 5' incision. The chain is UvrABC system protein C from Xanthomonas oryzae pv. oryzae (strain MAFF 311018).